The chain runs to 1242 residues: ATP-dependent RNA helicase DHX8 (1242 aa).

2 disordered regions span residues 75-283 (RPSR…DDPE) and 354-449 (SMKE…GLLP). Composition is skewed to basic and acidic residues over residues 87–97 (TVGDKKEDKKS), 113–141 (YSKKEESDDDEKVKAKPEKHSETHKKTDM), and 180–196 (RDRDTKRRSRSREDRHS). Composition is skewed to basic residues over residues 197–222 (DRRRSRSRDKERRRRSRSRDNRRRSR) and 232–252 (DRRHKSSSSRDHHERRRRSRS). The segment covering 253–269 (RSTERRDRRDRSRDCSE) has biased composition (basic and acidic residues). One can recognise an S1 motif domain in the interval 285 to 356 (GKIYSGKIAN…TGQKVSLSMK (72 aa)). A compositionally biased stretch (polar residues) spans 388–399 (FSSSTSMLNLQG). Residues 439 to 449 (PDFDEETGLLP) show a composition bias toward acidic residues. A Helicase ATP-binding domain is found at 596-759 (IKAVTDNQIL…FFKAPIFTIP (164 aa)). 609–616 (GETGSGKT) serves as a coordination point for ATP. The short motif at 706 to 709 (DEAH) is the DEAH box element. The Helicase C-terminal domain maps to 777 to 957 (YLDASLITVM…TTVLQLKTMG (181 aa)).

This sequence belongs to the DEAD box helicase family. DEAH subfamily. DDX8/PRP22 sub-subfamily. Identified in the spliceosome C complex.

It localises to the nucleus. It catalyses the reaction ATP + H2O = ADP + phosphate + H(+). Its function is as follows. Involved in pre-mRNA splicing as component of the spliceosome. Facilitates nuclear export of spliced mRNA by releasing the RNA from the spliceosome. Before and after egg-chamber formation, required for nurse-cell chromatin dispersal (NCCD) probably by playing a role in spliceosome localization to chromatin/interchromatin spaces. This chain is ATP-dependent RNA helicase DHX8, found in Drosophila melanogaster (Fruit fly).